We begin with the raw amino-acid sequence, 959 residues long: Outer capsid protein VP2 (959 aa).

Belongs to the orbivirus VP2 family.

It is found in the virion. Its function is as follows. The VP2 protein is one of the two proteins (with VP5) which constitute the virus particle outer capsid. It is the major target of the host immunogenic response. Responsible for viral attachment to target host cell, probably by binding to sialic acid. This attachment induces virion internalization predominantly through clathrin-dependent endocytosis. This is Outer capsid protein VP2 (Segment-2) from Antilocapra americana (Pronghorn).